Reading from the N-terminus, the 212-residue chain is Ribonuclease HII (212 aa).

The 195-residue stretch at 17–211 (RVLAGIDEAG…VLELLDLTDS (195 aa)) folds into the RNase H type-2 domain. Residues Asp23, Glu24, and Asp120 each coordinate a divalent metal cation.

It belongs to the RNase HII family. It depends on Mn(2+) as a cofactor. Mg(2+) serves as cofactor.

It is found in the cytoplasm. The enzyme catalyses Endonucleolytic cleavage to 5'-phosphomonoester.. In terms of biological role, endonuclease that specifically degrades the RNA of RNA-DNA hybrids. This chain is Ribonuclease HII, found in Chloroflexus aggregans (strain MD-66 / DSM 9485).